A 670-amino-acid polypeptide reads, in one-letter code: Zinc finger and BTB domain-containing protein 5 (670 aa).

A BTB domain is found at 24 to 93 (CDCVIVVGNR…MYTSTLMLGE (70 aa)). 2 disordered regions span residues 158–256 (LSSS…QEDG) and 268–382 (EDAQ…SSTD). The segment covering 170–181 (PMSSSMRSSLDQ) has biased composition (polar residues). Phosphoserine is present on Ser-234. A Glycyl lysine isopeptide (Lys-Gly) (interchain with G-Cter in SUMO2) cross-link involves residue Lys-239. Residues 285–295 (SRATQVETSFE) show a composition bias toward polar residues. Glycyl lysine isopeptide (Lys-Gly) (interchain with G-Cter in SUMO2) cross-links involve residues Lys-317 and Lys-325. Residues 345–360 (AEGSESVEVEGVVVSA) are compositionally biased toward low complexity. Residues 361–374 (EKIDLSPESSDRSF) show a composition bias toward basic and acidic residues. Residue Ser-366 is modified to Phosphoserine. Glycyl lysine isopeptide (Lys-Gly) (interchain with G-Cter in SUMO2) cross-links involve residues Lys-399 and Lys-410. Residues 414–432 (SNFSASQSTDDNLPNTTSD) show a composition bias toward polar residues. 2 disordered regions span residues 414–433 (SNFS…TSDC) and 442–470 (LLSP…EPAD). The segment covering 444–459 (SPEAGPAGGPSSAPGS) has biased composition (low complexity). Glycyl lysine isopeptide (Lys-Gly) (interchain with G-Cter in SUMO2) cross-links involve residues Lys-535, Lys-587, and Lys-590. The C2H2-type 1 zinc-finger motif lies at 606 to 628 (YACKICCKTFLTLTDCKKHIRVH). A C2H2-type 2; atypical zinc finger spans residues 634–657 (YACLKCGKRFSQSSHLYKHSKTTC). Glycyl lysine isopeptide (Lys-Gly) (interchain with G-Cter in SUMO2) cross-links involve residues Lys-638 and Lys-651.

Its subcellular location is the nucleus. In terms of biological role, may be involved in transcriptional regulation. In Mus musculus (Mouse), this protein is Zinc finger and BTB domain-containing protein 5 (Zbtb5).